A 411-amino-acid polypeptide reads, in one-letter code: Basic leucine zipper 10 (411 aa).

Disordered regions lie at residues Met-1–Ser-36, Ser-76–Asn-99, Ser-140–Lys-251, and Asn-362–Asp-411. Positions Pro-24 to Ser-36 are enriched in polar residues. Basic and acidic residues predominate over residues Asp-89–Gly-98. 2 stretches are compositionally biased toward polar residues: residues Ser-146–Leu-173 and Ser-183–Arg-193. A Phosphoserine modification is found at Ser-196. A compositionally biased stretch (acidic residues) spans Ser-196–Glu-206. One can recognise a bZIP domain in the interval Asp-215 to Leu-278. A basic motif region spans residues Lys-217–Lys-236. Positions Ser-219–Arg-226 match the Nuclear localization signal motif. The tract at residues Leu-243–Leu-257 is leucine-zipper. Polar residues predominate over residues Pro-368 to Ala-390.

Belongs to the bZIP family. In terms of assembly, forms a heterodimer with BZIP1, BZIP2, BZIP9, BZIP11, BZIP44, BZIP53 and BZIP63. Interacts with ABI3 and forms a complex made of ABI3, BZIP53 and BZIP10. Binding with LSD1 leads to cytoplasmic retention. As to expression, expressed in roots, shoots, stems, young leaves, trichomes, hydathodes, siliques, seeds, and flowers, mostly in vascular tissues.

Its subcellular location is the nucleus. The protein localises to the cytoplasm. Its function is as follows. Transcription factor that binds to the C-box-like motif (5'-TGCTGACGTCA-3') and G-box-like motif (5'-CCACGTGGCC-3'), ABRE elements, of gene promoters. Binds to the 5'-ACGT-3' motif of seed storage protein (SSP) encoding gene promoters (e.g. At2S and CRU3) and promotes their expression in seeds when in complex with ABI3 and BZIP53. Involved in the defense responses to the biotrophic pathogen Hyaloperonospora parasitica and oxidative stress responses; mediates positively cell death. Promotes BZIP53-mediated response to hypoosmolarity stress that leads to POX1/PRODH1 accumulation. This is Basic leucine zipper 10 (BZIP10) from Arabidopsis thaliana (Mouse-ear cress).